A 233-amino-acid chain; its full sequence is Pre-hexon-linking protein VIII (233 aa).

Thr64 is modified (phosphothreonine; by host). The propeptide occupies 112 to 163 (ARHSFRYKGRTEPYPSPAIKRVLIRGKGIQLNDEVTSPLGVRPDGVFQLGGS). Ser180 is subject to Phosphoserine; by host.

It belongs to the adenoviridae hexon-linking protein family. In terms of assembly, interacts with the peripentonal hexons as well as the hexons in the facets. Part of a complex composed of the core-capsid bridging protein, the endosome lysis protein VI and the hexon-linking protein VIII; these interactions bridge the virus core to the capsid. In terms of processing, cleaved by the viral protease during virion maturation. May cause the middle segment to be shed from the capsid.

Its subcellular location is the virion. It localises to the host nucleus. In terms of biological role, structural component of the virion that acts as a cement protein on the capsid interior and which glue the peripentonal hexons and group-of-nine hexons together. The protein is Pre-hexon-linking protein VIII of Homo sapiens (Human).